The following is a 776-amino-acid chain: Ent-8-alpha-hydroxylabd-13-en-15-yl diphosphate synthase CPS4, chloroplastic (776 aa).

The transit peptide at 1-60 directs the protein to the chloroplast; the sequence is MSFASNATGFRIPLTTCVYPSPILRFNAKVGSGSSYGTTEAQRNMKCVDGIGRSRVVAVA. Lys-226 contacts substrate. Residues Asp-357 and Asp-359 each coordinate Mg(2+). Residues 357-360 carry the DXDD motif motif; the sequence is DSDD. A substrate-binding site is contributed by Lys-443.

The protein belongs to the terpene synthase family. It depends on Mg(2+) as a cofactor.

The protein localises to the plastid. Its subcellular location is the chloroplast. It catalyses the reaction ent-8alpha-hydroxylabd-13-en-15-yl diphosphate = (2E,6E,10E)-geranylgeranyl diphosphate + H2O. The protein operates within secondary metabolite biosynthesis; terpenoid biosynthesis. In terms of biological role, involved in diterpenoid biosynthesis. Catalyzes the conversion of all-trans-geranylgeranyl diphosphate to ent-8alpha-hydroxylabd-13-en-15-yl diphosphate. This chain is Ent-8-alpha-hydroxylabd-13-en-15-yl diphosphate synthase CPS4, chloroplastic, found in Salvia miltiorrhiza (Chinese sage).